A 52-amino-acid chain; its full sequence is DNA-directed RNA polymerase subunit Rpo12 (52 aa).

Zn(2+) is bound by residues Cys13, Cys30, and Cys33.

Belongs to the archaeal Rpo12/eukaryotic RPC10 RNA polymerase subunit family. In terms of assembly, part of the RNA polymerase complex. It depends on Zn(2+) as a cofactor.

Its subcellular location is the cytoplasm. It catalyses the reaction RNA(n) + a ribonucleoside 5'-triphosphate = RNA(n+1) + diphosphate. In terms of biological role, DNA-dependent RNA polymerase (RNAP) catalyzes the transcription of DNA into RNA using the four ribonucleoside triphosphates as substrates. This Pyrobaculum arsenaticum (strain DSM 13514 / JCM 11321 / PZ6) protein is DNA-directed RNA polymerase subunit Rpo12.